Reading from the N-terminus, the 207-residue chain is MTKLSKRQQQILDFIKKEVKTKGYPPSVREIGEAVGLASSSTVHGHLARLESKGYIRRDPTKPRAIEILDADFSASNQTDDVISVPIIGKVTAGQPITAIENIEDYFPLPKRLVSSEDHVFMLEVMGDSMIEAGILDGDYVIVRQQQSADNGDIVVAMTEDNEATVKRFFKEKDHIRLQPENSNLEPIIVRDCTILGKVIGVYRVIH.

A DNA-binding region (H-T-H motif) is located at residues 28-48 (VREIGEAVGLASSSTVHGHLA). Catalysis depends on for autocatalytic cleavage activity residues Ser129 and Lys167.

It belongs to the peptidase S24 family. As to quaternary structure, homodimer.

It catalyses the reaction Hydrolysis of Ala-|-Gly bond in repressor LexA.. Its function is as follows. Represses a number of genes involved in the response to DNA damage (SOS response), including recA and lexA. In the presence of single-stranded DNA, RecA interacts with LexA causing an autocatalytic cleavage which disrupts the DNA-binding part of LexA, leading to derepression of the SOS regulon and eventually DNA repair. In Geobacillus sp. (strain WCH70), this protein is LexA repressor.